Here is a 216-residue protein sequence, read N- to C-terminus: Adenylate kinase (216 aa).

10 to 15 (GAGKGT) contacts ATP. The NMP stretch occupies residues 30 to 59 (STGDMLRAAVKAETPVGLKAKAVMEAGQLV). Residues threonine 31, arginine 36, 57-59 (QLV), 85-88 (GYPR), and glutamine 92 contribute to the AMP site. The interval 126 to 164 (GRYTCATCGKGYHDKFEKPAVEGTCDKCGGHEFKRRPDD) is LID. Arginine 127 serves as a coordination point for ATP. Residues cysteine 130, cysteine 133, cysteine 150, and cysteine 153 each coordinate Zn(2+). AMP is bound by residues arginine 161 and arginine 172. Alanine 200 lines the ATP pocket.

Belongs to the adenylate kinase family. As to quaternary structure, monomer.

It localises to the cytoplasm. The catalysed reaction is AMP + ATP = 2 ADP. The protein operates within purine metabolism; AMP biosynthesis via salvage pathway; AMP from ADP: step 1/1. In terms of biological role, catalyzes the reversible transfer of the terminal phosphate group between ATP and AMP. Plays an important role in cellular energy homeostasis and in adenine nucleotide metabolism. This is Adenylate kinase from Novosphingobium aromaticivorans (strain ATCC 700278 / DSM 12444 / CCUG 56034 / CIP 105152 / NBRC 16084 / F199).